Reading from the N-terminus, the 77-residue chain is Conotoxin Cl6.15 (77 aa).

An N-terminal signal peptide occupies residues 1–19 (MKLSVKFLLFLMILPLIAG). Residues 20-37 (EDMSDNDAPKSVDVQRNV) constitute a propeptide that is removed on maturation. Cystine bridges form between Cys49–Cys61, Cys55–Cys66, and Cys60–Cys75.

Belongs to the conotoxin I1 superfamily. As to expression, expressed by the venom duct.

It localises to the secreted. In Californiconus californicus (California cone), this protein is Conotoxin Cl6.15.